The following is an 845-amino-acid chain: Beta-glucosidase (845 aa).

N-linked (GlcNAc...) asparagine glycosylation is present at N66. D225 is an active-site residue. Residues N304, N438, and N621 are each glycosylated (N-linked (GlcNAc...) asparagine). In terms of domain architecture, PA14 spans 408–568; that stretch reads AENAGLIAKF…DDDEEIRNAA (161 aa).

The protein belongs to the glycosyl hydrolase 3 family. As to quaternary structure, homotetramer.

The catalysed reaction is Hydrolysis of terminal, non-reducing beta-D-glucosyl residues with release of beta-D-glucose.. It participates in glycan metabolism; cellulose degradation. This Kluyveromyces marxianus (Yeast) protein is Beta-glucosidase.